We begin with the raw amino-acid sequence, 218 residues long: Probable transaldolase (218 aa).

The Schiff-base intermediate with substrate role is filled by lysine 84.

It belongs to the transaldolase family. Type 3B subfamily.

The protein resides in the cytoplasm. The catalysed reaction is D-sedoheptulose 7-phosphate + D-glyceraldehyde 3-phosphate = D-erythrose 4-phosphate + beta-D-fructose 6-phosphate. The protein operates within carbohydrate degradation; pentose phosphate pathway; D-glyceraldehyde 3-phosphate and beta-D-fructose 6-phosphate from D-ribose 5-phosphate and D-xylulose 5-phosphate (non-oxidative stage): step 2/3. Transaldolase is important for the balance of metabolites in the pentose-phosphate pathway. The sequence is that of Probable transaldolase from Sulfurihydrogenibium sp. (strain YO3AOP1).